Reading from the N-terminus, the 238-residue chain is 1-(5-phosphoribosyl)-5-[(5-phosphoribosylamino)methylideneamino] imidazole-4-carboxamide isomerase (238 aa).

Asp8 serves as the catalytic Proton acceptor. Asp129 acts as the Proton donor in catalysis.

Belongs to the HisA/HisF family.

It localises to the cytoplasm. It catalyses the reaction 1-(5-phospho-beta-D-ribosyl)-5-[(5-phospho-beta-D-ribosylamino)methylideneamino]imidazole-4-carboxamide = 5-[(5-phospho-1-deoxy-D-ribulos-1-ylimino)methylamino]-1-(5-phospho-beta-D-ribosyl)imidazole-4-carboxamide. The protein operates within amino-acid biosynthesis; L-histidine biosynthesis; L-histidine from 5-phospho-alpha-D-ribose 1-diphosphate: step 4/9. The sequence is that of 1-(5-phosphoribosyl)-5-[(5-phosphoribosylamino)methylideneamino] imidazole-4-carboxamide isomerase from Brachyspira hyodysenteriae (strain ATCC 49526 / WA1).